Consider the following 78-residue polypeptide: MSRVCQVTGKRPMSGNNRSHAMNATKRRFLPNLHSHRFWVEGEKRFVTLRVSAKGMRVIDKKGIETVLAEIRARGEKY.

The disordered stretch occupies residues 1-22 (MSRVCQVTGKRPMSGNNRSHAM).

The protein belongs to the bacterial ribosomal protein bL28 family.

The sequence is that of Large ribosomal subunit protein bL28 from Yersinia pseudotuberculosis serotype O:1b (strain IP 31758).